The chain runs to 91 residues: PqqA binding protein (91 aa).

Belongs to the PqqD family. As to quaternary structure, monomer. Interacts with PqqE.

Its pathway is cofactor biosynthesis; pyrroloquinoline quinone biosynthesis. Its function is as follows. Functions as a PqqA binding protein and presents PqqA to PqqE, in the pyrroloquinoline quinone (PQQ) biosynthetic pathway. This chain is PqqA binding protein, found in Pseudomonas fluorescens (strain SBW25).